The sequence spans 519 residues: Probable cytosol aminopeptidase (519 aa).

Residues lysine 283 and aspartate 288 each contribute to the Mn(2+) site. Lysine 295 is a catalytic residue. Mn(2+)-binding residues include aspartate 306, aspartate 365, and glutamate 367. Residue arginine 369 is part of the active site.

This sequence belongs to the peptidase M17 family. Requires Mn(2+) as cofactor.

It is found in the cytoplasm. The enzyme catalyses Release of an N-terminal amino acid, Xaa-|-Yaa-, in which Xaa is preferably Leu, but may be other amino acids including Pro although not Arg or Lys, and Yaa may be Pro. Amino acid amides and methyl esters are also readily hydrolyzed, but rates on arylamides are exceedingly low.. It catalyses the reaction Release of an N-terminal amino acid, preferentially leucine, but not glutamic or aspartic acids.. In terms of biological role, presumably involved in the processing and regular turnover of intracellular proteins. Catalyzes the removal of unsubstituted N-terminal amino acids from various peptides. The chain is Probable cytosol aminopeptidase from Mycobacterium marinum (strain ATCC BAA-535 / M).